The following is a 178-amino-acid chain: Oligoribonuclease (178 aa).

Residues 7–168 form the Exonuclease domain; that stretch reads LIWIDLEMTG…DDIRESIAEL (162 aa). The active site involves Y128.

This sequence belongs to the oligoribonuclease family.

The protein localises to the cytoplasm. Its function is as follows. 3'-to-5' exoribonuclease specific for small oligoribonucleotides. The chain is Oligoribonuclease from Francisella tularensis subsp. novicida (strain U112).